We begin with the raw amino-acid sequence, 242 residues long: Type III pantothenate kinase (242 aa).

An ATP-binding site is contributed by 5-12 (DLGNTRLK). Substrate is bound by residues Y94 and 100–103 (GCDR). D102 acts as the Proton acceptor in catalysis. T124 serves as a coordination point for ATP. T175 serves as a coordination point for substrate.

Belongs to the type III pantothenate kinase family. Homodimer. NH4(+) is required as a cofactor. K(+) serves as cofactor.

It localises to the cytoplasm. The enzyme catalyses (R)-pantothenate + ATP = (R)-4'-phosphopantothenate + ADP + H(+). It participates in cofactor biosynthesis; coenzyme A biosynthesis; CoA from (R)-pantothenate: step 1/5. Functionally, catalyzes the phosphorylation of pantothenate (Pan), the first step in CoA biosynthesis. In Psychrobacter arcticus (strain DSM 17307 / VKM B-2377 / 273-4), this protein is Type III pantothenate kinase.